The chain runs to 323 residues: MNSPKKITVTGAAGQIAYSLLWRIANGEVYGADTPVELNLLEIPDALGGAEGVAMELSDSAFPLLHNINITADLNEAFDGANAAFLVGAKPRGKGEERAALLSNNGKIFGPQGKAINDHAAQDIRVLVVGNPANTNALIAMSNAPDVPQSRFNAMMRLDHNRAISQLATKTGRLSSEFQDVVVWGNHSAAQFPDITYATVGGEKVSDLVDHDWYVNEFIPRVAKRGAEIIEVRGKSSAASAASSAVDHMRDWIQGTETWASAAIPSTGAYGIPEGIILGLPTVSRNGEWEVVEGLEINDFQRARIDANVEELQGEREAVKDLL.

11 to 17 lines the NAD(+) pocket; it reads GAAGQIA. Residues arginine 92 and arginine 98 each coordinate substrate. Residues asparagine 105, glutamine 112, and 129 to 131 contribute to the NAD(+) site; that span reads VGN. Substrate-binding residues include asparagine 131 and arginine 162. The active-site Proton acceptor is the histidine 187.

This sequence belongs to the LDH/MDH superfamily. MDH type 2 family.

The catalysed reaction is (S)-malate + NAD(+) = oxaloacetate + NADH + H(+). Its function is as follows. Catalyzes the reversible oxidation of malate to oxaloacetate. This Corynebacterium efficiens (strain DSM 44549 / YS-314 / AJ 12310 / JCM 11189 / NBRC 100395) protein is Malate dehydrogenase.